The sequence spans 111 residues: Ribonuclease P protein component (111 aa).

It belongs to the RnpA family. In terms of assembly, consists of a catalytic RNA component (M1 or rnpB) and a protein subunit.

The enzyme catalyses Endonucleolytic cleavage of RNA, removing 5'-extranucleotides from tRNA precursor.. Functionally, RNaseP catalyzes the removal of the 5'-leader sequence from pre-tRNA to produce the mature 5'-terminus. It can also cleave other RNA substrates such as 4.5S RNA. The protein component plays an auxiliary but essential role in vivo by binding to the 5'-leader sequence and broadening the substrate specificity of the ribozyme. This is Ribonuclease P protein component from Mycoplasmopsis pulmonis (strain UAB CTIP) (Mycoplasma pulmonis).